The following is a 591-amino-acid chain: Fanconi anemia group C protein homolog (591 aa).

In terms of assembly, belongs to the multisubunit FA complex composed of FANCA, FANCB, FANCC, FANCE, FANCF, FANCG, FANCL/PHF9 and FANCM. This complex may also include HSP70. Interacts with ZBTB32. Upon IFNG induction, interacts with STAT1. Interacts with CDK1. Interacts with EIF2AK2. Ubiquitous.

The protein resides in the nucleus. It is found in the cytoplasm. Functionally, DNA repair protein that may operate in a postreplication repair or a cell cycle checkpoint function. May be implicated in interstrand DNA cross-link repair and in the maintenance of normal chromosome stability. Upon IFNG induction, may facilitate STAT1 activation by recruiting STAT1 to IFNGR1. The chain is Fanconi anemia group C protein homolog (Fancc) from Mus musculus (Mouse).